Consider the following 235-residue polypeptide: Transmembrane protein 176A (235 aa).

The residue at position 38 (serine 38) is a Phosphoserine. 4 consecutive transmembrane segments (helical) span residues 55–75 (VASW…GGFF), 86–106 (SGAA…AFIY), 113–133 (YWAL…IAAL), and 193–213 (AMLL…LWLY).

Belongs to the TMEM176 family. As to quaternary structure, interacts with MCOLN2.

The protein resides in the membrane. This chain is Transmembrane protein 176A (TMEM176A), found in Homo sapiens (Human).